The primary structure comprises 328 residues: Phosphate acyltransferase (328 aa).

Belongs to the PlsX family. In terms of assembly, homodimer. Probably interacts with PlsY.

Its subcellular location is the cytoplasm. It catalyses the reaction a fatty acyl-[ACP] + phosphate = an acyl phosphate + holo-[ACP]. The protein operates within lipid metabolism; phospholipid metabolism. Functionally, catalyzes the reversible formation of acyl-phosphate (acyl-PO(4)) from acyl-[acyl-carrier-protein] (acyl-ACP). This enzyme utilizes acyl-ACP as fatty acyl donor, but not acyl-CoA. This is Phosphate acyltransferase from Mycoplasma genitalium (strain ATCC 33530 / DSM 19775 / NCTC 10195 / G37) (Mycoplasmoides genitalium).